Consider the following 506-residue polypeptide: MEETLKSLSMDYLNLLINGQAFSDVTFSVEGRLVHAHRCILAARSLFFRKFFCGAAADQAAAPPGALLLDHLSPRSPSGGASASSPRGAGGSAAAAAAATPGAVIPVSSVSYEVFLLLLQFLYSGQVSLVPQKGEPRPGCGERGCWHTHCAAAVDLALDTLAAARSFGVEELALLTQKQLAGMVEKASIEDVMKVLMASRKQDLHQLWTTCSHLVAKSGLPPEVLAKHLPIDVVAKIDELRLKSMSRRSPFLSHHHHHPHAAAAGIEASSAAELDDHHKIRRMRRALDSSDVELVKLMVMGEGLNLDDALALHYAVENCSREVVKALLELGAADVNHPAGPAGKTPLHVAAEMVCPDMVAVLLDHHADPNVRTVDGVTPLDILRTLTSDFLFKGAVPGLAHIEPNKLRLCLELVQSAAMVMSREDAQTAAVNAAPIYGESPGGGGGGGVYNASGTSSSMVNLSLDNRMVYLNLGMDAQFGKMNDGGDGDDGGSRGPSSLFSPHGFP.

One can recognise a BTB domain in the interval 23–131 (SDVTFSVEGR…LYSGQVSLVP (109 aa)). A C2HC NPR-type zinc finger spans residues 137-151 (RPGCGERGCWHTHCA). Zn(2+) is bound by residues Cys140, Cys145, His147, and Cys150. 4 ANK repeats span residues 278-306 (HKIR…GLNL), 307-337 (DDAL…DVNH), 342-371 (AGKT…DPNV), and 375-409 (DGVT…KLRL). Residues 481–506 (KMNDGGDGDDGGSRGPSSLFSPHGFP) form a disordered region.

Belongs to the plant 'ANKYRIN-BTB/POZ' family. 'NOOT-BOP-COCH-like' (NBCL) subfamily. As to quaternary structure, homodimer. Interacts with TGAL5, TGAL7, TGAL8 and TGAL11.

The protein resides in the nucleus. Its subcellular location is the cytoplasm. It participates in protein modification; protein ubiquitination. Functionally, may act as a substrate-specific adapter of an E3 ubiquitin-protein ligase complex (CUL3-RBX1-BTB) which mediates the ubiquitination and subsequent proteasomal degradation of target proteins. Transcriptional co-regulator involved in the promotion of leaf and floral meristem fate and determinacy. Required for the abscission of senescent organs, probably by regulating the cell wall disorganization in abscission zones (AZs, e.g. pulvini at the base of leaves). Maybe involved in defense response against pathogens. The sequence is that of BTB/POZ domain and ankyrin repeat-containing protein NPR5 from Oryza sativa subsp. japonica (Rice).